A 98-amino-acid chain; its full sequence is DNA-directed RNA polymerase subunit omega (98 aa).

Belongs to the RNA polymerase subunit omega family. As to quaternary structure, the RNAP catalytic core consists of 2 alpha, 1 beta, 1 beta' and 1 omega subunit. When a sigma factor is associated with the core the holoenzyme is formed, which can initiate transcription.

It catalyses the reaction RNA(n) + a ribonucleoside 5'-triphosphate = RNA(n+1) + diphosphate. Promotes RNA polymerase assembly. Latches the N- and C-terminal regions of the beta' subunit thereby facilitating its interaction with the beta and alpha subunits. This Xylella fastidiosa (strain M12) protein is DNA-directed RNA polymerase subunit omega.